We begin with the raw amino-acid sequence, 29 residues long: Cytochrome c oxidase subunit 7A1, mitochondrial (29 aa).

Residues 1–13 (LENRVAEKQKLFQ) show a composition bias toward basic and acidic residues. Positions 1 to 29 (LENRVAEKQKLFQEDNGLPVHLKGGATDN) are disordered.

Belongs to the cytochrome c oxidase VIIa family. In terms of assembly, component of the complex IV (CIV, cytochrome c oxidase), a multisubunit enzyme composed of 14 subunits. The complex is composed of a catalytic core of 3 subunits MT-CO1, MT-CO2 and MT-CO3, encoded in the mitochondrial DNA, and 11 supernumerary subunits COX4I1 (or COX4I2), COX5A, COX5B, COX6A2 (or COX6A1), COX6B1 (or COX6B2), COX6C, COX7A1 (or COX7A2), COX7B, COX7C, COX8B and NDUFA4, which are encoded in the nuclear genome. The complex exists as a monomer or a dimer and forms supercomplexes (SCs) in the inner mitochondrial membrane with NADH-ubiquinone oxidoreductase (complex I, CI) and ubiquinol-cytochrome c oxidoreductase (cytochrome b-c1 complex, complex III, CIII), resulting in different assemblies (supercomplex SCI(1)III(2)IV(1) and megacomplex MCI(2)III(2)IV(2)).

The protein localises to the mitochondrion inner membrane. It participates in energy metabolism; oxidative phosphorylation. In terms of biological role, component of the mitochondrial respiratory complex IV (CIV, also named cytochrome c oxidase complex), the last enzyme in the mitochondrial electron transport chain which drives oxidative phosphorylation. The CIV complex is the component of the respiratory chain that catalyzes the reduction of oxygen to water. Acts as an assembly factor that specifically drives the homodimerization of CIV complexes, mediating the formation of mitochondrial respiratory supercomplexes (respirasomes) containing two CIV: supercomplxes with two molecules of CIV show improved activity. Despite being highly expressed in brown adipose tissue, not required for thermogenesis. The sequence is that of Cytochrome c oxidase subunit 7A1, mitochondrial (COX7A1) from Ovis aries (Sheep).